The chain runs to 251 residues: NADPH-dependent oxidoreductase (251 aa).

The protein belongs to the flavin oxidoreductase frp family. It depends on FMN as a cofactor.

Functionally, reduces FMN, organic nitro compounds and disulfide DTNB. Involved in maintenance of the cellular redox state and the disulfide stress response. The chain is NADPH-dependent oxidoreductase (nfrA) from Staphylococcus aureus (strain bovine RF122 / ET3-1).